Here is a 151-residue protein sequence, read N- to C-terminus: Large ribosomal subunit protein uL13 (151 aa).

Belongs to the universal ribosomal protein uL13 family. In terms of assembly, part of the 50S ribosomal subunit.

Its function is as follows. This protein is one of the early assembly proteins of the 50S ribosomal subunit, although it is not seen to bind rRNA by itself. It is important during the early stages of 50S assembly. In Synechococcus sp. (strain JA-3-3Ab) (Cyanobacteria bacterium Yellowstone A-Prime), this protein is Large ribosomal subunit protein uL13.